A 400-amino-acid polypeptide reads, in one-letter code: MAAASSLHAAPRVGSSSSFSSSSSAGRRSASAARSVRVAAAAGSCAARRAGGRMVARAAVASKAESPASAASSKSDGHEVLLFEALREALIEEMKEDPTVCVFGEDVGHYGGSYKVTKGLAEMFGDLRVLDTPIAENSFTGMGVGAAMKGLRPVVEGMNMGFLLLAYNQISNNCGMLHYTSGGQFKIPIVIRGPGGVGRQLGAEHSQRLESYFQSIPGLQMVACSTPYNAKGLMKAAIRSENPVVLFEHVLLYNLKEKIPDEEYVLCLEEAEMVRPGEHVTILTYSRMRYHVMQAAKTLVNKGYDPEVIDIRSLKPFDLHTIGNSIKKTHRVLIVEECMRTGGIGASLRSAIIDNFWDYLDAPIMCLSSQDVPTPYAAPLEDATVVQPAQIVAAVEQICQ.

The disordered stretch occupies residues 1 to 34 (MAAASSLHAAPRVGSSSSFSSSSSAGRRSASAAR). A chloroplast-targeting transit peptide spans 1-57 (MAAASSLHAAPRVGSSSSFSSSSSAGRRSASAARSVRVAAAAGSCAARRAGGRMVAR). A compositionally biased stretch (low complexity) spans 9–34 (AAPRVGSSSSFSSSSSAGRRSASAAR). A thiamine diphosphate-binding site is contributed by Glu-136. K(+) is bound by residues Ile-189, Ala-237, Ile-238, and Asn-242.

Tetramer of 2 alpha and 2 beta subunits. Thiamine diphosphate serves as cofactor.

The protein resides in the plastid. It is found in the chloroplast. It carries out the reaction N(6)-[(R)-lipoyl]-L-lysyl-[protein] + pyruvate + H(+) = N(6)-[(R)-S(8)-acetyldihydrolipoyl]-L-lysyl-[protein] + CO2. Functionally, the pyruvate dehydrogenase complex catalyzes the overall conversion of pyruvate to acetyl-CoA and CO(2). It contains multiple copies of three enzymatic components: pyruvate dehydrogenase (E1), dihydrolipoamide acetyltransferase (E2) and lipoamide dehydrogenase (E3). In Oryza sativa subsp. japonica (Rice), this protein is Pyruvate dehydrogenase E1 component subunit beta-4, chloroplastic.